The sequence spans 181 residues: Oligoribonuclease (181 aa).

In terms of domain architecture, Exonuclease spans 8-171; sequence LIWIDLEMTG…DDIRESVAEL (164 aa). Residue Tyr129 is part of the active site.

This sequence belongs to the oligoribonuclease family. In terms of assembly, homodimer.

Its subcellular location is the cytoplasm. In terms of biological role, 3'-to-5' exoribonuclease specific for small oligoribonucleotides. The chain is Oligoribonuclease from Escherichia coli O157:H7.